We begin with the raw amino-acid sequence, 682 residues long: Potassium-transporting ATPase ATP-binding subunit (682 aa).

Helical transmembrane passes span 34–54 (PVMF…LAMV), 58–78 (IAGS…TVLF), 219–239 (IALT…TATL), and 254–274 (VLVA…LSAI). The 4-aspartylphosphate intermediate role is filled by Asp307. ATP contacts are provided by residues Asp344, Glu348, 377–384 (FTAQSRMS), and Lys395. Mg(2+)-binding residues include Asp518 and Asp522. Transmembrane regions (helical) follow at residues 588–608 (FAII…LNVM), 616–636 (AILS…PLAL), and 662–682 (LLVP…LGLA).

It belongs to the cation transport ATPase (P-type) (TC 3.A.3) family. Type IA subfamily. In terms of assembly, the system is composed of three essential subunits: KdpA, KdpB and KdpC.

Its subcellular location is the cell inner membrane. The enzyme catalyses K(+)(out) + ATP + H2O = K(+)(in) + ADP + phosphate + H(+). Part of the high-affinity ATP-driven potassium transport (or Kdp) system, which catalyzes the hydrolysis of ATP coupled with the electrogenic transport of potassium into the cytoplasm. This subunit is responsible for energy coupling to the transport system and for the release of the potassium ions to the cytoplasm. The protein is Potassium-transporting ATPase ATP-binding subunit of Salmonella dublin (strain CT_02021853).